The following is a 656-amino-acid chain: Pumilio homology domain family member 6 (656 aa).

Residues 1 to 107 (MAPLTKKTNG…GGENGNHTEQ (107 aa)) form a disordered region. A compositionally biased stretch (basic and acidic residues) spans 13-23 (SAKEVSHSEKK). A phosphoserine; by CK2 mark is found at serine 31, serine 34, and serine 35. Serine 34 and serine 35 each carry phosphoserine. Positions 52–89 (SDDDDLDDLSTSDSEAEEEADELDISDDSEEHENENEE) are enriched in acidic residues. Over residues 90–107 (KEGKDKSEGGENGNHTEQ) the composition is skewed to basic and acidic residues. Positions 133-483 (RLRVKTPPLP…ELLSKFAPMF (351 aa)) constitute a PUM-HD domain. 6 Pumilio repeats span residues 155–191 (ELSK…QIVD), 192–227 (ALKG…TIIN), 228–264 (ELHG…QMIK), 340–376 (ELLH…LILK), 377–413 (ALKN…KTFS), and 415–450 (TVKE…PIVK).

The protein belongs to the PUF6 family. Component of the ASH1 mRNP composed of at least PUF6, SHE2, SHE3, SHE1 and the ASH1 mRNA. Interacts with SHE2 and FUN12. Post-translationally, phosphorylation by CK2 relieves translational repression activity.

It is found in the bud tip. It localises to the nucleus. Its subcellular location is the nucleolus. Functionally, RNA-binding protein involved in post-transcriptional regulation. Component of the ASH1 mRNP which transports the ASH1 mRNA to the distal tip of the bud, where the ASH1 protein is translated and targeted to the daughter cell nucleus. Binds to the ASH1 3'-UTR containing the PUF consensus UUGU segment and represses its translation. This silencing of ASH1 mRNA is critical for asymmetric seggregation of ASH1 to the daughter cell nucleus. The chain is Pumilio homology domain family member 6 (PUF6) from Saccharomyces cerevisiae (strain ATCC 204508 / S288c) (Baker's yeast).